The following is a 297-amino-acid chain: Probable ABC transporter phosphite binding protein PhnD1 (297 aa).

Positions 1–24 (MFNLKYFLVSSSLLFSVFSSPVFS) are cleaved as a signal peptide.

The protein belongs to the phosphate/phosphite/phosphonate binding protein family. In terms of assembly, the complex may be composed of two ATP-binding proteins (PhnC1), two transmembrane proteins (PhnE1) and a solute-binding protein (PhnD1).

The protein resides in the periplasm. In terms of biological role, probably part of the ABC transporter complex PhnD1C1E1. Binds strongly to inorganic phosphite and with very weak affinities to methylphosphonate (MPn) and phosphate. The sequence is that of Probable ABC transporter phosphite binding protein PhnD1 from Prochlorococcus marinus (strain MIT 9301).